A 915-amino-acid polypeptide reads, in one-letter code: Hexokinase HKDC1 (915 aa).

The segment at 1-20 is mitochondrial-binding peptide (MBP); that stretch reads MFAVHLVAFYFTKLKEDQIK. 2 Hexokinase domains span residues 16 to 458 and 464 to 903; these read EDQI…MVTA and QAQR…LITA. ATP is bound by residues R30 and 84–89; that span reads DLGGSK. The hexokinase small subdomain 1 stretch occupies residues 73 to 207; that stretch reads DGSENGEFLS…DLDVDILALV (135 aa). 84 to 91 serves as a coordination point for D-glucose 6-phosphate; it reads DLGGSKFR. D-glucose-binding positions include S155, 172 to 173, and 208 to 209; these read TK and ND. The segment at 208–447 is hexokinase large subdomain 1; the sequence is NDTVGTMMTC…CDVRFLLSES (240 aa). The D-glucose 6-phosphate site is built by D209 and T232. Residues N235, E260, and 291-294 contribute to the D-glucose site; that span reads QLFE. Residue 413-415 coordinates D-glucose 6-phosphate; it reads DGT. ATP is bound at residue 425–426; that stretch reads KR. D-glucose 6-phosphate is bound by residues S449 and 532-536; that span reads DLGGT. Positions 521–652 are hexokinase small subdomain 2; that stretch reads DGTEKGKFLA…EFDLDIVAIV (132 aa). 532 to 537 provides a ligand contact to ATP; it reads DLGGTN. D-glucose contacts are provided by residues 600–601, 617–618, and 653–654; these read SF, TK, and ND. Positions 653 to 892 are hexokinase large subdomain 2; that stretch reads NDTVGTMMTC…CDVTFMLSED (240 aa). 2 residues coordinate D-glucose 6-phosphate: D654 and T677. T677 is an ATP binding site. Residues 679-680, E705, and E739 contribute to the D-glucose site; that span reads SN. Residues 744–745, 781–785, and 860–864 each bind ATP; these read GM, TKFLS, and TLYKL. D-glucose 6-phosphate is bound by residues 858-860 and S894; that span reads DGT.

Belongs to the hexokinase family. Widely expressed. Detected in retina, brain, cerebellum, liver, lung, kidney, spleen, pancreas and intestine.

It is found in the cytoplasm. Its subcellular location is the mitochondrion membrane. It localises to the photoreceptor inner segment. It catalyses the reaction a D-hexose + ATP = a D-hexose 6-phosphate + ADP + H(+). It carries out the reaction D-glucose + ATP = D-glucose 6-phosphate + ADP + H(+). It participates in carbohydrate metabolism; hexose metabolism. The protein operates within carbohydrate degradation; glycolysis; D-glyceraldehyde 3-phosphate and glycerone phosphate from D-glucose: step 1/4. Catalyzes the phosphorylation of hexose to hexose 6-phosphate, although at very low level compared to other hexokinases. Has low glucose phosphorylating activity compared to other hexokinases. Involved in glucose homeostasis and hepatic lipid accumulation. Required to maintain whole-body glucose homeostasis during pregnancy; however additional evidences are required to confirm this role. The polypeptide is Hexokinase HKDC1 (Mus musculus (Mouse)).